A 442-amino-acid polypeptide reads, in one-letter code: Alpha-1,6-mannosyl-glycoprotein 2-beta-N-acetylglucosaminyltransferase (442 aa).

The Cytoplasmic portion of the chain corresponds to 1-9 (MRFRIYKRK). Residues 10–29 (VLILTLVVAACGFVLWSSNG) form a helical; Signal-anchor for type II membrane protein membrane-spanning segment. The Lumenal segment spans residues 30–442 (RQRKSDALGP…ELCKSYRRLQ (413 aa)). 2 N-linked (GlcNAc...) asparagine glycosylation sites follow: Asn-64 and Asn-81. Substrate is bound by residues 118–122 (QVHNR) and Asp-149. A disulfide bond links Cys-191 and Cys-205. 224 to 228 (QTKHH) provides a ligand contact to substrate. A Mn(2+)-binding site is contributed by Asp-256. Cysteines 278 and 281 form a disulfide. Substrate is bound at residue Arg-293. 3 disulfide bridges follow: Cys-329–Cys-352, Cys-334–Cys-435, and Cys-373–Cys-381. His-369 is a binding site for Mn(2+).

Belongs to the glycosyltransferase 16 (GT16) protein family. As to quaternary structure, homodimer. Mn(2+) serves as cofactor. Detected in liver, lung, testis, kidney, brain, spleen, thymus, uterus and intestine.

It localises to the golgi apparatus membrane. The enzyme catalyses an N(4)-{beta-D-GlcNAc-(1-&gt;2)-alpha-D-Man-(1-&gt;3)-[alpha-D-Man-(1-&gt;6)]-beta-D-Man-(1-&gt;4)-beta-D-GlcNAc-(1-&gt;4)-beta-D-GlcNAc}-L-asparaginyl-[protein] + UDP-N-acetyl-alpha-D-glucosamine = N(4)-{beta-D-GlcNAc-(1-&gt;2)-alpha-D-Man-(1-&gt;3)-[beta-D-GlcNAc-(1-&gt;2)-alpha-D-Man-(1-&gt;6)]-beta-D-Man-(1-&gt;4)-beta-D-GlcNAc-(1-&gt;4)-beta-D-GlcNAc}-L-asparaginyl-[protein] + UDP + H(+). It functions in the pathway protein modification; protein glycosylation. Plays an essential role in protein N-glycosylation. Catalyzes the transfer of N-acetylglucosamine (GlcNAc) onto the free terminal mannose moiety in the core structure of the nascent N-linked glycan chain, giving rise to the second branch in complex glycans. This is Alpha-1,6-mannosyl-glycoprotein 2-beta-N-acetylglucosaminyltransferase (Mgat2) from Mus musculus (Mouse).